Reading from the N-terminus, the 370-residue chain is Ubiquinone biosynthesis O-methyltransferase, mitochondrial (370 aa).

The N-terminal 86 residues, 1–86 (MWRGGRLGSR…TYRTPWKRLY (86 aa)), are a transit peptide targeting the mitochondrion. Arginine 125 contributes to the S-adenosyl-L-methionine binding site. Residues lysine 144 and lysine 150 each carry the N6-acetyllysine modification. Residues glycine 155 and aspartate 176 each coordinate S-adenosyl-L-methionine. Lysine 197 is modified (N6-acetyllysine). Position 223 (serine 223) interacts with S-adenosyl-L-methionine. Mg(2+) contacts are provided by glutamate 224, glutamate 227, and histidine 228. The disordered stretch occupies residues 336-370 (AQEHQEPAESALKGETGALHANTSGSPSVREEQRT).

It belongs to the class I-like SAM-binding methyltransferase superfamily. UbiG/COQ3 family. In terms of assembly, component of a multi-subunit COQ enzyme complex, composed of at least COQ3, COQ4, COQ5, COQ6, COQ7 and COQ9. Requires Mg(2+) as cofactor.

The protein localises to the mitochondrion inner membrane. It carries out the reaction 3,4-dihydroxy-5-(all-trans-decaprenyl)benzoate + S-adenosyl-L-methionine = 4-hydroxy-3-methoxy-5-(all-trans-decaprenyl)benzoate + S-adenosyl-L-homocysteine + H(+). The catalysed reaction is a 3-demethylubiquinone + S-adenosyl-L-methionine = a ubiquinone + S-adenosyl-L-homocysteine. It catalyses the reaction 3-demethylubiquinol-10 + S-adenosyl-L-methionine = ubiquinol-10 + S-adenosyl-L-homocysteine + H(+). The protein operates within cofactor biosynthesis; ubiquinone biosynthesis. O-methyltransferase required for two non-consecutive steps during ubiquinone biosynthesis. Catalyzes the 2 O-methylation of 3,4-dihydroxy-5-(all-trans-decaprenyl)benzoic acid into 4-hydroxy-3-methoxy-5-(all-trans-decaprenyl)benzoic acid. Also catalyzes the last step of ubiquinone biosynthesis by mediating methylation of 3-demethylubiquinone into ubiquinone. Also able to mediate the methylation of 3-demethylubiquinol-10 into ubiquinol-10. In Mus musculus (Mouse), this protein is Ubiquinone biosynthesis O-methyltransferase, mitochondrial.